Here is a 158-residue protein sequence, read N- to C-terminus: NAD(P)H-quinone oxidoreductase subunit J, chloroplastic (158 aa).

The protein belongs to the complex I 30 kDa subunit family. As to quaternary structure, NDH is composed of at least 16 different subunits, 5 of which are encoded in the nucleus.

Its subcellular location is the plastid. It is found in the chloroplast thylakoid membrane. It carries out the reaction a plastoquinone + NADH + (n+1) H(+)(in) = a plastoquinol + NAD(+) + n H(+)(out). The catalysed reaction is a plastoquinone + NADPH + (n+1) H(+)(in) = a plastoquinol + NADP(+) + n H(+)(out). NDH shuttles electrons from NAD(P)H:plastoquinone, via FMN and iron-sulfur (Fe-S) centers, to quinones in the photosynthetic chain and possibly in a chloroplast respiratory chain. The immediate electron acceptor for the enzyme in this species is believed to be plastoquinone. Couples the redox reaction to proton translocation, and thus conserves the redox energy in a proton gradient. In Nasturtium officinale (Watercress), this protein is NAD(P)H-quinone oxidoreductase subunit J, chloroplastic.